The chain runs to 227 residues: Probable FKBP-type 25 kDa peptidyl-prolyl cis-trans isomerase (227 aa).

The region spanning 144 to 227 (ATQVHVRYRG…VFEIDLLGFR (84 aa)) is the PPIase FKBP-type domain.

It belongs to the FKBP-type PPIase family.

It catalyses the reaction [protein]-peptidylproline (omega=180) = [protein]-peptidylproline (omega=0). PPIases accelerate the folding of proteins. The sequence is that of Probable FKBP-type 25 kDa peptidyl-prolyl cis-trans isomerase (fkl) from Pseudomonas aeruginosa (strain ATCC 15692 / DSM 22644 / CIP 104116 / JCM 14847 / LMG 12228 / 1C / PRS 101 / PAO1).